The following is a 518-amino-acid chain: MANVDMQTFDKIIVLDFGSQYNQLITRRIREFGVYSELLSHKLTAAQIKEMNPKGIIFSGGPNSVYDDGAFQIDPEIFELGIPILGICYGMQLMAHNLSGGKVESADNKEYGKAIITVKNQENVMFKDLPETQTVWMSHGDLVTQVPEGFEVTATSDNCPISAMANDAKKFYGLQFHTEVRNTEYGNDILRHFAFDVCQARSNWSMDDFIDMQIQKIRETVGDKKVLLGLSGGVDSSVVGVLLHKAIGNQLTSIFVDHGLLRKGEAEQVMDSLGGKFGLNIIKVDAKERFLNKLAGVSDPEKKRKIIGNEFIRVFDDESAKLEGIEFLAQGTLYTDIIESGTDTAQTIKSHHNVGGLPEDVQFKLIEPLNTLFKDEVRELGEKLGMPHELVWRQPFPGPGLGIRVIGEITEEKLEIVRDSDLILREEIAKHGLDKEIWQYFTVLPGIRSVGVMGDGRTYDYTVGIRAVTSIDGMTADFAQIPWDVLQEISVRIVNEVDHVNRVVYDITSKPPATIEWE.

Positions 11–203 (KIIVLDFGSQ…AFDVCQARSN (193 aa)) constitute a Glutamine amidotransferase type-1 domain. Cys88 (nucleophile) is an active-site residue. Active-site residues include His177 and Glu179. Residues 204 to 393 (WSMDDFIDMQ…LGMPHELVWR (190 aa)) form the GMPS ATP-PPase domain. 231–237 (SGGVDSS) provides a ligand contact to ATP.

In terms of assembly, homodimer.

The catalysed reaction is XMP + L-glutamine + ATP + H2O = GMP + L-glutamate + AMP + diphosphate + 2 H(+). Its pathway is purine metabolism; GMP biosynthesis; GMP from XMP (L-Gln route): step 1/1. Its function is as follows. Catalyzes the synthesis of GMP from XMP. The protein is GMP synthase [glutamine-hydrolyzing] of Ligilactobacillus salivarius (strain UCC118) (Lactobacillus salivarius).